We begin with the raw amino-acid sequence, 85 residues long: CDC42 small effector protein homolog (85 aa).

Residues Cys14 and Cys15 are each lipidated (S-palmitoyl cysteine). Residues 37-50 (IGNPTNFVHTGHIG) enclose the CRIB domain. Phosphoserine occurs at positions 78 and 81.

This sequence belongs to the CDC42SE/SPEC family.

The protein localises to the cytoplasm. It is found in the cytoskeleton. The protein resides in the cell membrane. Functionally, probably involved in the organization of the actin cytoskeleton by acting downstream of CDC42, inducing actin filament assembly. The protein is CDC42 small effector protein homolog (Spec2) of Drosophila melanogaster (Fruit fly).